The sequence spans 609 residues: Albumin (609 aa).

The N-terminal stretch at 1-18 is a signal peptide; sequence MKWVTFISLLFLFSSAYS. Positions 19-24 are excised as a propeptide; it reads RGVFRR. Albumin domains are found at residues 19-210, 211-403, and 404-601; these read RGVF…DELR, DEGK…EFKP, and LVEE…KLVA. Cu cation is bound at residue His-27. Ser-29 carries the phosphoserine; by FAM20C modification. Residue Glu-30 participates in Ca(2+) binding. N-linked (Glc) (glycation) lysine glycosylation occurs at Lys-36. A Ca(2+)-binding site is contributed by Asp-37. Lys-75 carries an N-linked (Glc) (glycation) lysine; in vitro glycan. Residues Cys-77 and Cys-86 are joined by a disulfide bond. Phosphoserine; by FAM20C is present on residues Ser-82 and Ser-89. Residue His-91 participates in Zn(2+) binding. Cystine bridges form between Cys-99–Cys-115, Cys-114–Cys-125, Cys-148–Cys-193, and Cys-192–Cys-201. The residue at position 107 (Thr-107) is a Phosphothreonine; by FAM20C. 2 N-linked (Glc) (glycation) lysine; in vitro glycosylation sites follow: Lys-161 and Lys-186. The N-linked (Glc) (glycation) lysine; in vitro glycan is linked to Lys-223. 2 disulfide bridges follow: Cys-224–Cys-270 and Cys-269–Cys-277. The residue at position 229 (Lys-229) is an N6-succinyllysine. The N-linked (Glc) (glycation) lysine; in vitro glycan is linked to Lys-249. A glycan (N-linked (Glc) (glycation) lysine) is linked at Lys-257. Lys-264 serves as a coordination point for (4Z,15Z)-bilirubin IXalpha. Glu-268 provides a ligand contact to Ca(2+). His-271 and Asp-273 together coordinate Zn(2+). Asp-273, Glu-276, Asp-279, and Asp-283 together coordinate Ca(2+). Intrachain disulfides connect Cys-289/Cys-303 and Cys-302/Cys-313. Phosphoserine is present on Ser-297. Lys-300 carries an N-linked (Glc) (glycation) lysine; in vitro glycan. An N-linked (Glc) (glycation) lysine glycan is attached at Lys-305. Residue Lys-337 is glycosylated (N-linked (Glc) (glycation) lysine; in vitro). 2 disulfides stabilise this stretch: Cys-340–Cys-385 and Cys-384–Cys-393. N-linked (Glc) (glycation) lysine glycosylation is present at Lys-341. N-linked (GlcNAc...) asparagine; in variant Redhill glycosylation occurs at Asn-342. Lys-347 carries an N-linked (Glc) (glycation) lysine; in vitro glycan. Lys-375 is a glycosylation site (N-linked (Glc) (glycation) lysine). N-linked (Glc) (glycation) lysine; in vitro glycosylation is found at Lys-402 and Lys-437. 4 disulfides stabilise this stretch: Cys-416/Cys-462, Cys-461/Cys-472, Cys-485/Cys-501, and Cys-500/Cys-511. Ser-443 is modified (phosphoserine). 2 positions are modified to phosphothreonine: Thr-444 and Thr-446. Residue Lys-460 is modified to N6-succinyllysine. Lys-463 carries N-linked (Glc) (glycation) lysine glycosylation. A glycan (N-linked (Glc) (glycation) lysine; in vitro) is linked at Lys-468. Residue Ser-513 is modified to Phosphoserine. A glycan (N-linked (GlcNAc...) asparagine; in variant Casebrook) is linked at Asp-518. 2 cysteine pairs are disulfide-bonded: Cys-538–Cys-583 and Cys-582–Cys-591. N6-succinyllysine is present on Lys-543. The N-linked (Glc) (glycation) lysine glycan is linked to Lys-549. N6-methyllysine; alternate is present on Lys-558. The N-linked (Glc) (glycation) lysine; alternate glycan is linked to Lys-558. N-linked (Glc) (glycation) lysine; in vitro glycosylation is found at Lys-560 and Lys-569. N6-succinyllysine is present on Lys-588. Lys-597 carries N-linked (Glc) (glycation) lysine; in vitro glycosylation.

The protein belongs to the ALB/AFP/VDB family. In terms of assembly, interacts with FCGRT; this interaction regulates ALB homeostasis. Interacts with TASOR. In plasma, occurs in a covalently-linked complex with chromophore-bound alpha-1-microglobulin with molar ratio 1:2 and 1:1; this interaction does not prevent fatty acid binding to ALB. Post-translationally, kenitra variant is partially O-glycosylated at Thr-620. It has two new disulfide bonds Cys-600 to Cys-602 and Cys-601 to Cys-606. In terms of processing, glycated in diabetic patients. Phosphorylated by FAM20C in the extracellular medium. Post-translationally, acetylated on Lys-223 by acetylsalicylic acid. As to expression, plasma.

It localises to the secreted. In terms of biological role, binds water, Ca(2+), Na(+), K(+), fatty acids, hormones, bilirubin and drugs. Its main function is the regulation of the colloidal osmotic pressure of blood. Major zinc transporter in plasma, typically binds about 80% of all plasma zinc. Major calcium and magnesium transporter in plasma, binds approximately 45% of circulating calcium and magnesium in plasma. Potentially has more than two calcium-binding sites and might additionally bind calcium in a non-specific manner. The shared binding site between zinc and calcium at residue Asp-273 suggests a crosstalk between zinc and calcium transport in the blood. The rank order of affinity is zinc &gt; calcium &gt; magnesium. Binds to the bacterial siderophore enterobactin and inhibits enterobactin-mediated iron uptake of E.coli from ferric transferrin, and may thereby limit the utilization of iron and growth of enteric bacteria such as E.coli. Does not prevent iron uptake by the bacterial siderophore aerobactin. The chain is Albumin (ALB) from Homo sapiens (Human).